The following is an 84-amino-acid chain: Exodeoxyribonuclease 7 small subunit (84 aa).

Belongs to the XseB family. In terms of assembly, heterooligomer composed of large and small subunits.

It localises to the cytoplasm. It catalyses the reaction Exonucleolytic cleavage in either 5'- to 3'- or 3'- to 5'-direction to yield nucleoside 5'-phosphates.. In terms of biological role, bidirectionally degrades single-stranded DNA into large acid-insoluble oligonucleotides, which are then degraded further into small acid-soluble oligonucleotides. The polypeptide is Exodeoxyribonuclease 7 small subunit (Yersinia pseudotuberculosis serotype O:1b (strain IP 31758)).